A 286-amino-acid polypeptide reads, in one-letter code: Putative short-chain type dehydrogenase/reductase Rv0148 (286 aa).

11 to 35 (VTGAGGGLGREYALTLAGEGASVVV) is an NAD(+) binding site. Serine 151 is a binding site for substrate. Residue tyrosine 164 is the Proton acceptor of the active site. Residue lysine 280 forms an Isoglutamyl lysine isopeptide (Lys-Gln) (interchain with Q-Cter in protein Pup) linkage.

Belongs to the short-chain dehydrogenases/reductases (SDR) family. Post-translationally, pupylated at Lys-280 by the prokaryotic ubiquitin-like protein Pup, which probably leads to its degradation by the proteasome.

In Mycobacterium tuberculosis (strain ATCC 25618 / H37Rv), this protein is Putative short-chain type dehydrogenase/reductase Rv0148.